We begin with the raw amino-acid sequence, 705 residues long: Polyribonucleotide nucleotidyltransferase (705 aa).

Residues Asp485 and Asp491 each coordinate Mg(2+). The KH domain occupies 552–611 (PRVYTMTIAPEKIRDVIGAGGKTINKIIGETGVQIDIKEDGKIYVMSSDSVGANRALKMI). Positions 621–689 (GEIYLGKVTR…DQGRINLSRR (69 aa)) constitute an S1 motif domain.

This sequence belongs to the polyribonucleotide nucleotidyltransferase family. Mg(2+) serves as cofactor.

It is found in the cytoplasm. It carries out the reaction RNA(n+1) + phosphate = RNA(n) + a ribonucleoside 5'-diphosphate. Involved in mRNA degradation. Catalyzes the phosphorolysis of single-stranded polyribonucleotides processively in the 3'- to 5'-direction. The polypeptide is Polyribonucleotide nucleotidyltransferase (Clostridium tetani (strain Massachusetts / E88)).